A 505-amino-acid chain; its full sequence is MSSGQQQPPPPRRVTNVGSLLLTPQENESLFTFLGKKCVTMSSAVVQLYAADRNCMWSKKCSGVACLVKDNPQRSYFLRIFDIKDGKLLWEQELYNNFVYNSPRGYFHTFAGDTCQVALNFANEEEAKKFRKAVTDLLGRRQRKSEKRRDPPNGPNLPMATVDIKNPEITTNRFYGPQINNISHTKEKKKGKAKKKRLTKADIGTPSNFQHIGHVGWDPNTGFDLNNLDPELKNLFDMCGISEAQLKDRETSKVIYDFIEKTGGVEAVKNELRRQAPPPPPPSRGGPPPPPPPPHSSGPPPPPARGRGAPPPPPSRAPTAAPPPPPPSRPGVGAPPPPPNRMYPPPLPALPSSAPSGPPPPPPPLSVSGSVAPPPPPPPPPPPGPPPPPGLPSDGDHQVPTPAGSKAALLDQIREGAQLKKVEQNSRPVSCSGRDALLDQIRQGIQLKSVTDAPESTPPAPAPTSGIVGALMEVMQKRSKAIHSSDEDEDEDDDEDFEDDDEWED.

Residue Ser-2 is modified to N-acetylserine. A WH1 domain is found at 34 to 141; it reads LGKKCVTMSS…KAVTDLLGRR (108 aa). Disordered regions lie at residues 138-163 and 185-205; these read LGRR…ATVD and TKEK…DIGT. The segment covering 186 to 198 has biased composition (basic residues); it reads KEKKKGKAKKKRL. Positions 203 to 216 constitute a CRIB domain; the sequence is IGTPSNFQHIGHVG. At Ser-242 the chain carries Phosphoserine; by TNK2. Tyr-256 carries the phosphotyrosine; by FAK1 and TNK2 modification. Disordered regions lie at residues 266 to 406, 449 to 468, and 477 to 505; these read EAVK…AGSK, SVTD…SGIV, and KRSK…EWED. Composition is skewed to pro residues over residues 276–349, 356–365, and 372–391; these read APPP…PLPA, SGPPPPPPPL, and APPP…PPGL. At Arg-307 the chain carries Omega-N-methylarginine. WH2 domains follow at residues 405–422 and 433–450; these read SKAA…LKKV and GRDA…LKSV. Phosphoserine is present on residues Ser-484 and Ser-485. Residues 486–505 are compositionally biased toward acidic residues; the sequence is DEDEDEDDDEDFEDDDEWED.

In terms of assembly, binds actin and the Arp2/3 complex. Interacts with CDC42. Interacts with FCHSD1. Interacts with FCHSD2. Binds to SH3 domains of GRB2. Interacts with the C-terminal SH3 domain of DNMBP. Interacts with SNX9. Interacts with the WW domains of PRPF40A/FBP11. Interacts with PTK2/FAK1. Interacts with PACSIN1, PACSIN2 and PACSIN3. Interacts with NOSTRIN. Binds to TNK2. Interacts with SNX33. Interacts with NONO (via second RRM domain); the interaction is direct. Component of a multiprotein complex with NONO and SFPQ; associates with the complex via direct interaction with NONO. Phosphorylation at Ser-242, Tyr-256, Ser-484 and Ser-485 enhances actin polymerization activity.

The protein resides in the cytoplasm. The protein localises to the cytoskeleton. Its subcellular location is the nucleus. Its function is as follows. Regulates actin polymerization by stimulating the actin-nucleating activity of the Arp2/3 complex. Involved in various processes, such as mitosis and cytokinesis, via its role in the regulation of actin polymerization. Together with CDC42, involved in the extension and maintenance of the formation of thin, actin-rich surface projections called filopodia. In addition to its role in the cytoplasm, also plays a role in the nucleus by regulating gene transcription, probably by promoting nuclear actin polymerization. Binds to HSF1/HSTF1 and forms a complex on heat shock promoter elements (HSE) that negatively regulates HSP90 expression. Plays a role in dendrite spine morphogenesis. The chain is Actin nucleation-promoting factor WASL (WASL) from Bos taurus (Bovine).